Reading from the N-terminus, the 963-residue chain is Longitudinals lacking protein, isoforms J/P/Q/S/Z (963 aa).

Positions valine 32 to glutamine 97 constitute a BTB domain. 4 disordered regions span residues leucine 115 to leucine 200, serine 228 to serine 340, aspartate 447 to valine 469, and glycine 482 to threonine 520. Low complexity-rich tracts occupy residues serine 162–proline 175, serine 228–threonine 251, threonine 263–serine 293, and asparagine 329–serine 340. Over residues lysine 491–proline 512 the composition is skewed to polar residues. The segment at tryptophan 849–glutamate 871 adopts a C2H2-type 1; degenerate zinc-finger fold. The C2H2-type 2; degenerate zinc-finger motif lies at tyrosine 878 to lysine 901. The disordered stretch occupies residues threonine 900–alanine 963. Residues lysine 901–proline 915 are compositionally biased toward basic and acidic residues. Residues serine 937 to threonine 953 show a composition bias toward low complexity. The segment covering tyrosine 954–alanine 963 has biased composition (polar residues).

As to expression, by stage 11, isoform Q, isoform P and isoform Z are expressed throughout the mesoderm. From stage 15, expression of isoform P expands to all tissues, whereas expression of isoform Z and isoform Q becomes restricted during later stages; starting from stage 14 to 16, isoform Z is expressed in muscle, and isoform Q and isoform Z are expressed in the CNS. For some isoforms, expression is also seen in specific types of cells in the embryo; isoform Z is expressed in the ventral furrow at stage 5, and isoform Q is expressed around the tracheal pits at stage 11. Isoform Z also shows transient enrichment in a dorsal cell layer in the CNS at stages 13 and 14.

The protein resides in the nucleus. Its function is as follows. Putative transcription factor required for axon growth and guidance in the central and peripheral nervous systems. Repels CNS axons away from the midline by promoting the expression of the midline repellent sli and its receptor robo. The polypeptide is Longitudinals lacking protein, isoforms J/P/Q/S/Z (Drosophila melanogaster (Fruit fly)).